The chain runs to 1100 residues: Guanylate cyclase 2G (1100 aa).

An N-terminal signal peptide occupies residues 1–43; sequence MASRARSEPPLEHRFYGGAESHAGHSSLVLTLFVVMLMTCLEA. The Extracellular segment spans residues 44–481; the sequence is AKLTVGFHAP…GAGMTASVTA (438 aa). Asn-55, Asn-85, Asn-94, Asn-418, and Asn-443 each carry an N-linked (GlcNAc...) asparagine glycan. A helical membrane pass occupies residues 482–502; it reads VIPTVTLLVVASAAAITGLML. The Cytoplasmic segment spans residues 503–1100; sequence WRLRGKVQNH…EEEAKVPEIL (598 aa). Residues 549-826 form the Protein kinase domain; sequence STVKISADCG…PAFPSIKKTL (278 aa). The Guanylate cyclase domain maps to 901-1031; that stretch reads TIFFSDIVGF…DTVNMASRME (131 aa).

This sequence belongs to the adenylyl cyclase class-4/guanylyl cyclase family. In terms of assembly, homooligomer. May interact with NPR1/GC-A. N-glycosylated. Expressed in lung, kidney and skeletal muscle. Low levels in intestine.

The protein localises to the cell membrane. The protein resides in the cytoplasm. The catalysed reaction is GTP = 3',5'-cyclic GMP + diphosphate. This Rattus norvegicus (Rat) protein is Guanylate cyclase 2G (Gucy2g).